The following is a 236-amino-acid chain: tRNA (guanine-N(1)-)-methyltransferase (236 aa).

Residues Gly114 and 134-139 (IGDYIL) each bind S-adenosyl-L-methionine.

This sequence belongs to the RNA methyltransferase TrmD family. Homodimer.

The protein resides in the cytoplasm. It carries out the reaction guanosine(37) in tRNA + S-adenosyl-L-methionine = N(1)-methylguanosine(37) in tRNA + S-adenosyl-L-homocysteine + H(+). In terms of biological role, specifically methylates guanosine-37 in various tRNAs. The chain is tRNA (guanine-N(1)-)-methyltransferase from Wolbachia pipientis wMel.